The primary structure comprises 536 residues: MSSRSHNGSVGRPLGSGPGFLGWEPVDPEAGRPRQPTQGPGLQMMAKGQPAGLSPSGPRGHSQAQEEEEEEEDEDRPGSGKPPTVSHRLGHRRALFEKRKRLSDYALIFGMFGIVVMVTETELSWGVYTKESLCSFALKCLISLSTVILLGLVILYHAREIQLFLVDNGADDWRIAMTWERVSLISLELAVCAIHPVPGHYRFTWTARLAFSLVPSAAEADVDVLLSIPMFLRLYLLARVMLLHSRIFTDASSRSIGALNRVTFNTRFVTKTLMTICPGTVLLVFSISSWIVAAWTVRVCERYHDKQEVTSNFLGAMWLISITFLSIGYGDMVPHTYCGKGVCLLTGIMGAGCTALVVAVVARKLELTKAEKHVHNFMMDTQLTKRVKNAAANVLRETWLIYKHTRLVKKPDQSRVRKHQRKFLQAIHQAQKLRTVKIEQGKVNDQANTLADLAKAQSIAYEVVSELQAQQEELEARLAALESRLDVLGASLQALPSLIAQAICPLPPPWPGPSHLTTAAQSPQSHWLPTTASDCG.

A disordered region spans residues Met1 to Gly90. The span at Gln65–Asp75 shows a compositional bias: acidic residues. A helical transmembrane segment spans residues Leu107–Val127. Residues Phe136–Tyr156 form a helical membrane-spanning segment. The chain crosses the membrane as a helical span at residues Val224–His244. Residues Leu273–Ala293 traverse the membrane as a helical segment. A helical membrane pass occupies residues Phe313–Val333. Residues Val342–Ala362 constitute an intramembrane region (pore-forming). The segment at Asp380–Ile459 is calmodulin-binding. Residues Val487–Pro507 traverse the membrane as a helical segment. The disordered stretch occupies residues Ser514 to Gly536. Residues His515–Gly536 are compositionally biased toward polar residues.

It belongs to the potassium channel KCNN family. KCa2.1/KCNN1 subfamily. Homodimer. Heteromultimer with KCNN2 and KCNN3. The complex is composed of 4 channel subunits each of which binds to a calmodulin subunit which regulates the channel activity through calcium-binding. Interacts with calmodulin. In terms of tissue distribution, widely expressed including brain.

It localises to the membrane. Its subcellular location is the cytoplasm. The protein resides in the myofibril. It is found in the sarcomere. The protein localises to the z line. It catalyses the reaction K(+)(in) = K(+)(out). Its activity is regulated as follows. Inhibited by bee venom neurotoxin apamin. Inhibited by d-tubocurarine and tetraethylammonium (TEA). Its function is as follows. Small conductance calcium-activated potassium channel that mediates the voltage-independent transmembrane transfer of potassium across the cell membrane through a constitutive interaction with calmodulin which binds the intracellular calcium allowing its opening. The current is characterized by a voltage-independent activation, an intracellular calcium concentration increase-dependent activation and a single-channel conductance of about 3 picosiemens. Also presents an inwardly rectifying current, thus reducing its already small outward conductance of potassium ions, which is particularly the case when the membrane potential displays positive values, above + 20 mV. Activation is followed by membrane hyperpolarization. Thought to regulate neuronal excitability by contributing to the slow component of synaptic afterhyperpolarization. The sequence is that of Small conductance calcium-activated potassium channel protein 1 from Rattus norvegicus (Rat).